We begin with the raw amino-acid sequence, 165 residues long: Small ribosomal subunit protein eS10 (165 aa).

Residues 92–165 form a disordered region; the sequence is ATLRRSRPET…FGRGRGQAPQ (74 aa). The segment covering 97 to 128 has biased composition (basic and acidic residues); sequence SRPETGRPRPKGLEGERPPRLPRGETDRDTYR. Positions 142–153 are enriched in low complexity; sequence AGAGAATEFQFR. Over residues 154 to 165 the composition is skewed to gly residues; it reads GGFGRGRGQAPQ.

Belongs to the eukaryotic ribosomal protein eS10 family. As to quaternary structure, component of the small ribosomal subunit.

The protein localises to the cytoplasm. It is found in the nucleus. The protein resides in the nucleolus. Its function is as follows. Component of the 40S ribosomal subunit. The ribosome is a large ribonucleoprotein complex responsible for the synthesis of proteins in the cell. The polypeptide is Small ribosomal subunit protein eS10 (rps10) (Xenopus laevis (African clawed frog)).